The following is a 269-amino-acid chain: uncharacterized protein (269 aa).

The ACT domain maps to 14–89; the sequence is FEYEIQVNRP…KLREPRLRDR (76 aa).

This is an uncharacterized protein from Bacillus subtilis (strain 168).